The primary structure comprises 300 residues: Sulfate adenylyltransferase subunit 2 (300 aa).

The disordered stretch occupies residues 281–300 (RAIDRDEAGSMEKKKREGYF).

This sequence belongs to the PAPS reductase family. CysD subfamily. Heterodimer composed of CysD, the smaller subunit, and CysN.

The enzyme catalyses sulfate + ATP + H(+) = adenosine 5'-phosphosulfate + diphosphate. The protein operates within sulfur metabolism; hydrogen sulfide biosynthesis; sulfite from sulfate: step 1/3. In terms of biological role, with CysN forms the ATP sulfurylase (ATPS) that catalyzes the adenylation of sulfate producing adenosine 5'-phosphosulfate (APS) and diphosphate, the first enzymatic step in sulfur assimilation pathway. APS synthesis involves the formation of a high-energy phosphoric-sulfuric acid anhydride bond driven by GTP hydrolysis by CysN coupled to ATP hydrolysis by CysD. The protein is Sulfate adenylyltransferase subunit 2 of Brucella abortus (strain 2308).